The sequence spans 316 residues: MALLDDVKSELAAIDNELPIAKKAQATAMIRFGNGLHSVDHHILVQAQLDSQDAAIWLQDTIRNLYGHEATLTPVSRQTPTGVVQRFIVRVPKGSAALVLQTGLYSRYTKNMVLGLPGDIINGKIAQIKAAWRGAFLAGGHLSDPGKASYLEIVCPNHEAALALVSTARRLGITAKPRKLRSSERVTLRDPDAIERMLILMGAPHSAREWTGKRSDGEARGKANRLANFDDANMRRSAKAAAEACDKVRQAFEILGDDVPDNLKSAGQLRLDHADASLEQLGRLADPPITKDAIAGRIRRLLQLAEKTEKARRQAA.

Positions 277–310 (SLEQLGRLADPPITKDAIAGRIRRLLQLAEKTEK) form a DNA-binding region, H-T-H motif.

This sequence belongs to the WhiA family.

Involved in cell division and chromosome segregation. This is Probable cell division protein WhiA from Bifidobacterium adolescentis (strain ATCC 15703 / DSM 20083 / NCTC 11814 / E194a).